Reading from the N-terminus, the 504-residue chain is Maturase K (504 aa).

It belongs to the intron maturase 2 family. MatK subfamily.

It is found in the plastid. It localises to the chloroplast. Its function is as follows. Usually encoded in the trnK tRNA gene intron. Probably assists in splicing its own and other chloroplast group II introns. This is Maturase K from Calyptranthes pallens (Spicewood).